Consider the following 296-residue polypeptide: mRNA 3'-end-processing protein RNA15 (296 aa).

In terms of domain architecture, RRM spans 18–96 (RVVYLGSIPY…RFLKCGYSSN (79 aa)). A disordered region spans residues 99-140 (ISGVSQQQQQQYNNINGNNNNNGNNNNNSNGPDFQNSGNANF). Low complexity predominate over residues 100-135 (SGVSQQQQQQYNNINGNNNNNGNNNNNSNGPDFQNS).

In terms of assembly, component of the CFIA complex, which is composed of RNA14, RNA15, PCF11 and CLP1. Interacts directly with RNA14. Interacts with polyadenylate-binding protein PAB1.

It is found in the nucleus. Its function is as follows. RNA-binding component of the cleavage factor IA (CFIA) complex, which is involved in the endonucleolytic cleavage during polyadenylation-dependent pre-mRNA 3'-end formation and cooperates with the cleavage factor NAB4/CFIB and the cleavage and polyadenylation factor (CPF) complex. Binds to A-rich RNA sequence elements. The sequence is that of mRNA 3'-end-processing protein RNA15 (RNA15) from Saccharomyces cerevisiae (strain ATCC 204508 / S288c) (Baker's yeast).